Reading from the N-terminus, the 158-residue chain is NAD(P)H-quinone oxidoreductase subunit J, chloroplastic (158 aa).

This sequence belongs to the complex I 30 kDa subunit family. As to quaternary structure, NDH is composed of at least 16 different subunits, 5 of which are encoded in the nucleus.

The protein localises to the plastid. It is found in the chloroplast thylakoid membrane. It carries out the reaction a plastoquinone + NADH + (n+1) H(+)(in) = a plastoquinol + NAD(+) + n H(+)(out). It catalyses the reaction a plastoquinone + NADPH + (n+1) H(+)(in) = a plastoquinol + NADP(+) + n H(+)(out). NDH shuttles electrons from NAD(P)H:plastoquinone, via FMN and iron-sulfur (Fe-S) centers, to quinones in the photosynthetic chain and possibly in a chloroplast respiratory chain. The immediate electron acceptor for the enzyme in this species is believed to be plastoquinone. Couples the redox reaction to proton translocation, and thus conserves the redox energy in a proton gradient. This Aethionema cordifolium (Lebanon stonecress) protein is NAD(P)H-quinone oxidoreductase subunit J, chloroplastic.